Consider the following 249-residue polypeptide: Eukaryotic translation initiation factor 3 subunit K (249 aa).

A PCI domain is found at Phe46 to Glu222.

This sequence belongs to the eIF-3 subunit K family. In terms of assembly, component of the eukaryotic translation initiation factor 3 (eIF-3) complex.

The protein resides in the cytoplasm. Functionally, component of the eukaryotic translation initiation factor 3 (eIF-3) complex, which is involved in protein synthesis of a specialized repertoire of mRNAs and, together with other initiation factors, stimulates binding of mRNA and methionyl-tRNAi to the 40S ribosome. The eIF-3 complex specifically targets and initiates translation of a subset of mRNAs involved in cell proliferation. In Aspergillus fumigatus (strain CBS 144.89 / FGSC A1163 / CEA10) (Neosartorya fumigata), this protein is Eukaryotic translation initiation factor 3 subunit K.